A 269-amino-acid polypeptide reads, in one-letter code: Tryptophan synthase alpha chain (269 aa).

Catalysis depends on proton acceptor residues Glu-49 and Asp-60.

The protein belongs to the TrpA family. Tetramer of two alpha and two beta chains.

It catalyses the reaction (1S,2R)-1-C-(indol-3-yl)glycerol 3-phosphate + L-serine = D-glyceraldehyde 3-phosphate + L-tryptophan + H2O. It participates in amino-acid biosynthesis; L-tryptophan biosynthesis; L-tryptophan from chorismate: step 5/5. In terms of biological role, the alpha subunit is responsible for the aldol cleavage of indoleglycerol phosphate to indole and glyceraldehyde 3-phosphate. In Delftia acidovorans (strain DSM 14801 / SPH-1), this protein is Tryptophan synthase alpha chain.